The chain runs to 114 residues: Large ribosomal subunit protein uL22c (114 aa).

Belongs to the universal ribosomal protein uL22 family. As to quaternary structure, part of the 50S ribosomal subunit.

The protein localises to the plastid. The protein resides in the chloroplast. This protein binds specifically to 23S rRNA. In terms of biological role, the globular domain of the protein is located near the polypeptide exit tunnel on the outside of the subunit, while an extended beta-hairpin is found that lines the wall of the exit tunnel in the center of the 70S ribosome. The polypeptide is Large ribosomal subunit protein uL22c (rpl22) (Gracilaria tenuistipitata var. liui (Red alga)).